Here is a 278-residue protein sequence, read N- to C-terminus: Aliphatic sulfonates import ATP-binding protein SsuB (278 aa).

The 222-residue stretch at 15 to 236 (LVLRDLSKRF…SQGDAAFAAL (222 aa)) folds into the ABC transporter domain. Position 47–54 (47–54 (GRSGCGKS)) interacts with ATP. A compositionally biased stretch (basic and acidic residues) spans 251-264 (PERESFTHPNDGEP). Residues 251-278 (PERESFTHPNDGEPRWPGVPAHGVRWAV) form a disordered region.

Belongs to the ABC transporter superfamily. Aliphatic sulfonates importer (TC 3.A.1.17.2) family. As to quaternary structure, the complex is composed of two ATP-binding proteins (SsuB), two transmembrane proteins (SsuC) and a solute-binding protein (SsuA).

It localises to the cell inner membrane. It catalyses the reaction ATP + H2O + aliphatic sulfonate-[sulfonate-binding protein]Side 1 = ADP + phosphate + aliphatic sulfonateSide 2 + [sulfonate-binding protein]Side 1.. In terms of biological role, part of the ABC transporter complex SsuABC involved in aliphatic sulfonates import. Responsible for energy coupling to the transport system. The chain is Aliphatic sulfonates import ATP-binding protein SsuB from Albidiferax ferrireducens (strain ATCC BAA-621 / DSM 15236 / T118) (Rhodoferax ferrireducens).